We begin with the raw amino-acid sequence, 238 residues long: FQLNVIANMNNHTMLKQTSIHWHCHFQKGTNWADGHAFVNACPIASGHSFLYDFTAPDQHGTFWYHSHLSTQYCDGLRGHFVVYDPADPHHDLYDVDDEHTIITLADWYHVAAKLGHHFQLGADSTLINGSGRFAGDPTAHLTVIYVTQGKRYRFHLVSLSCDPNHVFSIDSNHMTVIEADAVSHEHCTVDSIQIYAGQRYSFHLTVDQDVDNYWIRAHPSFGTYSFHDGINSAIARY.

2 Plastocyanin-like domains span residues 4-87 (NVIA…YDPA) and 100-238 (HTII…IARY). The N-linked (GlcNAc...) asparagine glycan is linked to Asn8. Cu cation-binding residues include His21, His23, His66, and His68. Cysteines 74 and 162 form a disulfide. An N-linked (GlcNAc...) asparagine glycan is attached at Asn165.

The protein belongs to the multicopper oxidase family. Monomer. It depends on Cu cation as a cofactor.

Its subcellular location is the secreted. The catalysed reaction is 4 hydroquinone + O2 = 4 benzosemiquinone + 2 H2O. Activity is strongly promoted by toluene. Activity is promoted by magnesium, potassium, cadmium, zinc, nickel, sodium, lead and manganese ions. Completely inhibited by IAA (cysteine protease inhibitor), PMSF (serine protease inhibitor), DEP (histidine protease inhibitor) and NAI (tyrosine protease inhibitor). Inhibited by ethanol, acetone, SDS, and EDTA. Activity is strongly inhibited by mercury ions. Also inhibited by lithium, aluminum, calcium, barium and iron ions. Lignin degradation and detoxification of lignin-derived products. Has activity towards 2,2'-azino-bis(3-ethylbenzothiazoline-6-sulfonic acid) (ABTS). This is Laccase-S from Trametes hirsuta (White-rot fungus).